The sequence spans 1748 residues: RANBP2-like and GRIP domain-containing protein 1 (1748 aa).

Thr14 carries the phosphothreonine modification. TPR repeat units lie at residues Pro51–Gln84, Gln575–Ile608, and Glu639–Trp672. The tract at residues Gly751–Glu796 is disordered. A compositionally biased stretch (low complexity) spans Ser769 to Pro788. Residues His1021–Asp1157 enclose the RanBD1 1 domain. Disordered regions lie at residues Thr1198–Trp1233 and Ala1291–Gly1316. Over residues Ile1220–Pro1229 the composition is skewed to polar residues. Positions Thr1302–Arg1314 are enriched in acidic residues. Positions Tyr1318 to Lys1454 constitute a RanBD1 2 domain. Over residues Asn1565–Glu1578 the composition is skewed to polar residues. The segment at Asn1565–Ser1606 is disordered. The span at Ser1579 to Val1602 shows a compositional bias: basic and acidic residues. The 51-residue stretch at Gln1685–Val1735 folds into the GRIP domain.

This Homo sapiens (Human) protein is RANBP2-like and GRIP domain-containing protein 1 (RGPD1).